The following is an 896-amino-acid chain: Serine/threonine-protein kinase TAO3 (896 aa).

Residues 24–277 enclose the Protein kinase domain; it reads FVDLHEIGHG…SLELLRHDFV (254 aa). Residues 30–38 and Lys-53 contribute to the ATP site; that span reads IGHGSFGAV. Catalysis depends on Asp-147, which acts as the Proton acceptor. Disordered regions lie at residues 316 to 366 and 403 to 423; these read SRNG…SVNS and DEAD…VQSQ. Polar residues predominate over residues 334–348; sequence GTSLTRKMDSLGSNH. Residues 349-366 show a composition bias toward low complexity; the sequence is SIPSTSVSTGSQSSSVNS. Residues 403–414 are compositionally biased toward basic and acidic residues; that stretch reads DEADHRDPRPEL. Coiled coils occupy residues 450–513, 545–650, and 752–873; these read EQEN…SKRQ, SFLE…LIRQ, and LKSL…IETF. Residues 565–587 are compositionally biased toward basic and acidic residues; the sequence is LNEDHSTPKKEKQERISKHKENL. The interval 565 to 593 is disordered; the sequence is LNEDHSTPKKEKQERISKHKENLQHTQAE.

The protein belongs to the protein kinase superfamily. STE Ser/Thr protein kinase family. STE20 subfamily.

The protein localises to the cytoplasm. Its subcellular location is the cell membrane. It localises to the membrane raft. The protein resides in the lipid droplet. It carries out the reaction L-seryl-[protein] + ATP = O-phospho-L-seryl-[protein] + ADP + H(+). It catalyses the reaction L-threonyl-[protein] + ATP = O-phospho-L-threonyl-[protein] + ADP + H(+). Serine/threonine-protein kinase that acts as a regulator of the p38/MAPK14 stress-activated MAPK cascade and of the MAPK8/JNK cascade. In response to DNA damage, involved in the G2/M transition DNA damage checkpoint by activating the p38/MAPK14 stress-activated MAPK cascade, probably by mediating phosphorylation of upstream MAP kinase kinases. Inhibits basal activity of the MAPK8/JNK cascade. The chain is Serine/threonine-protein kinase TAO3 (taok3) from Xenopus laevis (African clawed frog).